The primary structure comprises 80 residues: Phycocyanin-645 alpha-1 chain (80 aa).

Arg16 is a (2R,3E)-phycocyanobilin binding site. Mesobiliverdin-binding residues include Cys18, Gln24, Tyr25, and Lys40. 15,16-dihydrobiliverdin-binding residues include Pro71 and Ile73.

This sequence belongs to the phycoerythrin family. In terms of assembly, heterotetramer of 2 different alpha chains and 2 identical beta chains which form 2 alpha-beta heterodimers within the heterotetramer. Contains one phycocyanobilin chromophore, one mesobiliverdin chromophore and one 15,16-dihydrobiliverdin chromophore with binding mediated by both the alpha and beta subunits.

It localises to the plastid. It is found in the chloroplast thylakoid membrane. Its function is as follows. Light-harvesting photosynthetic tetrapyrrole chromophore-protein from the phycobiliprotein complex. This is Phycocyanin-645 alpha-1 chain from Chroomonas sp.